A 471-amino-acid chain; its full sequence is Secretogranin-3 (471 aa).

The signal sequence occupies residues 1–22; the sequence is MGFLWTGSWILVLVLNSGPIQA. 4 disordered regions span residues 24–73, 92–145, 208–231, and 345–405; these read PKPE…SNFS, KAKQ…HQLD, ANNYEEAPEKPTSRTENQDGKIPE, and KLEK…DEAK. Basic and acidic residues predominate over residues 28–45; the sequence is GSQDKSLHNRELSAERPL. Ser-40 carries the phosphoserine modification. Ser-40 is a glycosylation site (O-linked (Xyl...) (chondroitin sulfate) serine). Over residues 62–73 the composition is skewed to low complexity; it reads PSESKPSESNFS. Composition is skewed to basic and acidic residues over residues 106-142, 214-231, 345-355, and 363-405; these read LNVDDADSTKNRKLTDEYDSTKSGLDRKVQDDPDGLH, APEKPTSRTENQDGKIPE, KLEKNTTDSKS, and EKSH…DEAK. Phosphoserine is present on Ser-365.

Interacts with CHGA. Interacts with secretogranin II/SCG2. Interacts (via C-terminus) with CPE. As to expression, expression restricted to the brain and pituitary gland. Not detected in the adrenal gland.

The protein localises to the cytoplasmic vesicle. The protein resides in the secretory vesicle. Its subcellular location is the secretory vesicle membrane. It localises to the secreted. Its function is as follows. Member of the granin protein family that regulates the biogenesis of secretory granules. Acts as a sorting receptor for intragranular proteins including chromogranin A/CHGA. May also play a role in angiogenesis. Promotes endothelial proliferation, migration and tube formation through MEK/ERK signaling pathway. The chain is Secretogranin-3 (Scg3) from Rattus norvegicus (Rat).